Consider the following 1173-residue polypeptide: Pleckstrin homology domain-containing family A member 6 (1173 aa).

Residues 1 to 22 are compositionally biased toward polar residues; the sequence is MSNKTGGKRSATINSDIANHNM. Residues 1–39 are disordered; sequence MSNKTGGKRSATINSDIANHNMVSEVPPERPNIRATRTS. The 100-residue stretch at 59–158 folds into the PH domain; that stretch reads PVTKAGWLYK…WIQAMGEAAR (100 aa). Residues 163-346 are disordered; sequence PAQKSVPQPV…PSRFYPMPRR (184 aa). Over residues 201–233 the composition is skewed to basic and acidic residues; the sequence is LEPEAKTRGEGDGRGCEKAERRPERPEVKKETL. 2 positions are modified to phosphoserine: Ser-247 and Ser-251. 2 stretches are compositionally biased toward polar residues: residues 270–281 and 311–322; these read NGWQYSSPSRPG and RKSSMNQLQQWV. Phosphoserine occurs at positions 314, 459, 461, and 472. Tyr-492 is modified (phosphotyrosine). Ser-665 carries the post-translational modification Phosphoserine. Disordered regions lie at residues 737–872 and 888–984; these read RKNN…PRDI and ALNK…RPAY. Composition is skewed to low complexity over residues 761–782 and 789–799; these read SSNS…SPFS and GSPTKPGSSEE. The span at 815-824 shows a compositional bias: pro residues; sequence ESPPTVPPLP. Ser-864 carries the phosphoserine modification. Residue Thr-868 is modified to Phosphothreonine. Position 901 is a phosphoserine (Ser-901). Thr-908 bears the Phosphothreonine mark. Residues 915–926 are compositionally biased toward polar residues; sequence RTTNGLTNGLSS. Ser-925 bears the Phosphoserine mark. Positions 940 to 952 are enriched in basic and acidic residues; it reads GKVKMSVEEQMDR. Residues 953-967 show a composition bias toward basic residues; that stretch reads MRRHQSGSMKEKRRS. Residues Ser-973, Ser-979, and Ser-992 each carry the phosphoserine modification. Thr-1045 bears the Phosphothreonine mark. Residue Ser-1065 is modified to Phosphoserine. Disordered stretches follow at residues 1093 to 1114 and 1130 to 1173; these read PIGE…QEQE and RGRM…TMRV. A Phosphothreonine modification is found at Thr-1140. The segment covering 1141 to 1155 has biased composition (pro residues); the sequence is PSPPTSPASPTPPVN. Ser-1142 bears the Phosphoserine mark. The residue at position 1145 (Thr-1145) is a Phosphothreonine. Phosphoserine is present on residues Ser-1146 and Ser-1149. A Phosphothreonine modification is found at Thr-1151.

This is Pleckstrin homology domain-containing family A member 6 (Plekha6) from Mus musculus (Mouse).